The chain runs to 253 residues: 5-oxoprolinase subunit A (253 aa).

The protein belongs to the LamB/PxpA family. Forms a complex composed of PxpA, PxpB and PxpC.

The catalysed reaction is 5-oxo-L-proline + ATP + 2 H2O = L-glutamate + ADP + phosphate + H(+). In terms of biological role, catalyzes the cleavage of 5-oxoproline to form L-glutamate coupled to the hydrolysis of ATP to ADP and inorganic phosphate. This is 5-oxoprolinase subunit A from Bacillus thuringiensis subsp. konkukian (strain 97-27).